Here is a 130-residue protein sequence, read N- to C-terminus: Small ribosomal subunit protein uS9 (130 aa).

The protein belongs to the universal ribosomal protein uS9 family.

This is Small ribosomal subunit protein uS9 from Desulfosudis oleivorans (strain DSM 6200 / JCM 39069 / Hxd3) (Desulfococcus oleovorans).